The following is a 313-amino-acid chain: Porphobilinogen deaminase (313 aa).

Residue C242 is modified to S-(dipyrrolylmethanemethyl)cysteine.

This sequence belongs to the HMBS family. In terms of assembly, monomer. Requires dipyrromethane as cofactor.

The catalysed reaction is 4 porphobilinogen + H2O = hydroxymethylbilane + 4 NH4(+). The protein operates within porphyrin-containing compound metabolism; protoporphyrin-IX biosynthesis; coproporphyrinogen-III from 5-aminolevulinate: step 2/4. In terms of biological role, tetrapolymerization of the monopyrrole PBG into the hydroxymethylbilane pre-uroporphyrinogen in several discrete steps. This chain is Porphobilinogen deaminase, found in Escherichia coli O6:H1 (strain CFT073 / ATCC 700928 / UPEC).